The chain runs to 86 residues: Small ribosomal subunit protein bS20 (86 aa).

It belongs to the bacterial ribosomal protein bS20 family.

Its function is as follows. Binds directly to 16S ribosomal RNA. This is Small ribosomal subunit protein bS20 from Oceanobacillus iheyensis (strain DSM 14371 / CIP 107618 / JCM 11309 / KCTC 3954 / HTE831).